The chain runs to 198 residues: Synaptobrevin homolog YKT6-B (198 aa).

A Longin domain is found at 8–127 (VLYKGENKVH…IQYNALDSYL (120 aa)). Residues 138–198 (PMSKVQAELD…RKQNSCCDIM (61 aa)) enclose the v-SNARE coiled-coil homology domain. C194 carries the S-palmitoyl cysteine lipid modification. The residue at position 195 (C195) is a Cysteine methyl ester. The S-farnesyl cysteine moiety is linked to residue C195. Positions 196–198 (DIM) are cleaved as a propeptide — removed in mature form.

The protein belongs to the synaptobrevin family. Palmitoylated; catalyzes its own palmitoylation. Palmitoylation is required for Golgi targeting. Post-translationally, farnesylation is required for Golgi targeting.

It is found in the cytoplasm. Its subcellular location is the cytosol. It localises to the cytoplasmic vesicle membrane. The protein resides in the golgi apparatus membrane. Functionally, vesicular soluble NSF attachment protein receptor (v-SNARE) mediating vesicle docking and fusion to a specific acceptor cellular compartment. Functions in endoplasmic reticulum to Golgi transport; as part of a SNARE complex composed of GOSR1, GOSR2 and STX5. Functions in early/recycling endosome to TGN transport; as part of a SNARE complex composed of BET1L, GOSR1 and STX5. Has a S-palmitoyl transferase activity. This Xenopus laevis (African clawed frog) protein is Synaptobrevin homolog YKT6-B (ykt6-b).